The following is a 100-amino-acid chain: NAD(P)H-quinone oxidoreductase subunit 4L, chloroplastic (100 aa).

Transmembrane regions (helical) follow at residues 1 to 21 (MFGH…YGLI), 29 to 49 (ALMC…TFPN), and 63 to 83 (VFVI…VLAI).

Belongs to the complex I subunit 4L family. As to quaternary structure, NDH is composed of at least 16 different subunits, 5 of which are encoded in the nucleus.

The protein localises to the plastid. The protein resides in the chloroplast thylakoid membrane. It catalyses the reaction a plastoquinone + NADH + (n+1) H(+)(in) = a plastoquinol + NAD(+) + n H(+)(out). The catalysed reaction is a plastoquinone + NADPH + (n+1) H(+)(in) = a plastoquinol + NADP(+) + n H(+)(out). In terms of biological role, NDH shuttles electrons from NAD(P)H:plastoquinone, via FMN and iron-sulfur (Fe-S) centers, to quinones in the photosynthetic chain and possibly in a chloroplast respiratory chain. The immediate electron acceptor for the enzyme in this species is believed to be plastoquinone. Couples the redox reaction to proton translocation, and thus conserves the redox energy in a proton gradient. The protein is NAD(P)H-quinone oxidoreductase subunit 4L, chloroplastic of Huperzia lucidula (Shining clubmoss).